A 367-amino-acid polypeptide reads, in one-letter code: Germination protease (367 aa).

Positions 1 to 13 (MEEQQIPFQVRTD) are excised as a propeptide. The tract at residues 267–287 (KDDPSKSLTPAGMSFGNRKLT) is disordered.

Belongs to the peptidase A25 family. In terms of assembly, homotetramer. Autoproteolytically processed. The inactive tetrameric zymogen termed p46 autoprocesses to a smaller form termed p41, which is active only during spore germination.

It carries out the reaction Endopeptidase action with P4 Glu or Asp, P1 preferably Glu &gt; Asp, P1' hydrophobic and P2' Ala.. In terms of biological role, initiates the rapid degradation of small, acid-soluble proteins during spore germination. The chain is Germination protease from Oceanobacillus iheyensis (strain DSM 14371 / CIP 107618 / JCM 11309 / KCTC 3954 / HTE831).